A 290-amino-acid polypeptide reads, in one-letter code: Bifunctional protein FolD (290 aa).

Residues 169–171 (GAS), I194, and I235 each bind NADP(+).

This sequence belongs to the tetrahydrofolate dehydrogenase/cyclohydrolase family. As to quaternary structure, homodimer.

It catalyses the reaction (6R)-5,10-methylene-5,6,7,8-tetrahydrofolate + NADP(+) = (6R)-5,10-methenyltetrahydrofolate + NADPH. It carries out the reaction (6R)-5,10-methenyltetrahydrofolate + H2O = (6R)-10-formyltetrahydrofolate + H(+). It participates in one-carbon metabolism; tetrahydrofolate interconversion. Its function is as follows. Catalyzes the oxidation of 5,10-methylenetetrahydrofolate to 5,10-methenyltetrahydrofolate and then the hydrolysis of 5,10-methenyltetrahydrofolate to 10-formyltetrahydrofolate. The protein is Bifunctional protein FolD of Helicobacter pylori (strain J99 / ATCC 700824) (Campylobacter pylori J99).